The sequence spans 82 residues: Small ribosomal subunit protein bS18 (82 aa).

The protein belongs to the bacterial ribosomal protein bS18 family. As to quaternary structure, part of the 30S ribosomal subunit. Forms a tight heterodimer with protein bS6.

In terms of biological role, binds as a heterodimer with protein bS6 to the central domain of the 16S rRNA, where it helps stabilize the platform of the 30S subunit. The chain is Small ribosomal subunit protein bS18 from Chlamydia caviae (strain ATCC VR-813 / DSM 19441 / 03DC25 / GPIC) (Chlamydophila caviae).